The following is a 305-amino-acid chain: ATP synthase gamma chain (305 aa).

This sequence belongs to the ATPase gamma chain family. F-type ATPases have 2 components, CF(1) - the catalytic core - and CF(0) - the membrane proton channel. CF(1) has five subunits: alpha(3), beta(3), gamma(1), delta(1), epsilon(1). CF(0) has three main subunits: a, b and c.

The protein localises to the cell membrane. Its function is as follows. Produces ATP from ADP in the presence of a proton gradient across the membrane. The gamma chain is believed to be important in regulating ATPase activity and the flow of protons through the CF(0) complex. The sequence is that of ATP synthase gamma chain from Streptomyces coelicolor (strain ATCC BAA-471 / A3(2) / M145).